The primary structure comprises 480 residues: Cysteine--tRNA ligase (480 aa).

Cysteine 29 is a Zn(2+) binding site. The 'HIGH' region motif lies at 31-41 (VTVYDHCHIGH). Zn(2+)-binding residues include cysteine 209, histidine 234, and glutamate 238. Positions 266 to 270 (KMSKS) match the 'KMSKS' region motif. Lysine 269 is an ATP binding site.

It belongs to the class-I aminoacyl-tRNA synthetase family. In terms of assembly, monomer. Requires Zn(2+) as cofactor.

The protein resides in the cytoplasm. The enzyme catalyses tRNA(Cys) + L-cysteine + ATP = L-cysteinyl-tRNA(Cys) + AMP + diphosphate. The sequence is that of Cysteine--tRNA ligase from Geobacter sp. (strain M21).